A 384-amino-acid polypeptide reads, in one-letter code: Troponin T (384 aa).

Over residues 1 to 15 (MSDEEEYSEEEEEVP) the composition is skewed to acidic residues. 4 disordered regions span residues 1-23 (MSDE…PRHS), 61-169 (RAKE…KEQL), 237-257 (LRHK…KYPP), and 313-384 (PKWF…EEEE). 2 stretches are compositionally biased toward basic and acidic residues: residues 61-74 (RAKE…LKDK) and 81-126 (MRAD…EKKR). Residues 316-327 (FGERPGKKKGDP) show a composition bias toward basic and acidic residues. Positions 328 to 384 (ESPEEEEVKADAGVDDELEEPTFEPEPEPEPEEEAAEEEAEEEEEEEEEEEEEEEEE) are enriched in acidic residues.

It belongs to the troponin T family.

Troponin T is the tropomyosin-binding subunit of troponin, the thin filament regulatory complex which confers calcium-sensitivity to striated muscle actomyosin ATPase activity. The polypeptide is Troponin T (TNT) (Periplaneta americana (American cockroach)).